An 83-amino-acid polypeptide reads, in one-letter code: MTKPQINLQDAFLNQVRKENIPVTIFLVNGFQLKGMVRGFDNFTVILESEGKQLMVYKHAISTVSPLKPVSTSFSEAKAPEKS.

Residues D10–V70 enclose the Sm domain.

It belongs to the Hfq family. Homohexamer.

Its function is as follows. RNA chaperone that binds small regulatory RNA (sRNAs) and mRNAs to facilitate mRNA translational regulation in response to envelope stress, environmental stress and changes in metabolite concentrations. Also binds with high specificity to tRNAs. This is RNA-binding protein Hfq from Pelotomaculum thermopropionicum (strain DSM 13744 / JCM 10971 / SI).